We begin with the raw amino-acid sequence, 342 residues long: MITFSNPWIGVIIPCIIIFTLSTFSAIYILPHHVSNNELTLFICASAMVWISYIIAIIVPPGSPPKNYTPPENGMKMYCLKCKAYKPERTHHSKALGVCVLKMDHHCPWTNNTVGHRNMPHFMRFLVWVDMTVGYLFIRLCIRIMKLWRDKHLPSYLFDKTEVILSIVFLPASFFVLFTVGILTIRVFVNMCNGITQIESWECDRIESLVRRKIVTEERAEFPYDIELFTNIFNAVGSPLTFWLPWGQPRGDGITFEKNESGYTEEGEPLCWPPDHVDYDPENVPLQNLKDGLRRRGEEPDCLLGGIGAGKMQAENDFYKRDHWRNVEGEKLADFGVEHTDI.

Residues 1–8 (MITFSNPW) are Cytoplasmic-facing. The helical transmembrane segment at 9–29 (IGVIIPCIIIFTLSTFSAIYI) threads the bilayer. At 30 to 38 (LPHHVSNNE) the chain is on the lumenal side. The helical transmembrane segment at 39–59 (LTLFICASAMVWISYIIAIIV) threads the bilayer. Topologically, residues 60–124 (PPGSPPKNYT…GHRNMPHFMR (65 aa)) are cytoplasmic. The DHHC domain occupies 77–127 (MYCLKCKAYKPERTHHSKALGVCVLKMDHHCPWTNNTVGHRNMPHFMRFLV). Cys107 functions as the S-palmitoyl cysteine intermediate in the catalytic mechanism. The chain crosses the membrane as a helical span at residues 125 to 145 (FLVWVDMTVGYLFIRLCIRIM). The Lumenal portion of the chain corresponds to 146 to 162 (KLWRDKHLPSYLFDKTE). The chain crosses the membrane as a helical span at residues 163–183 (VILSIVFLPASFFVLFTVGIL). The Cytoplasmic portion of the chain corresponds to 184-342 (TIRVFVNMCN…ADFGVEHTDI (159 aa)).

It belongs to the DHHC palmitoyltransferase family. PFA4 subfamily.

It localises to the endoplasmic reticulum membrane. The catalysed reaction is L-cysteinyl-[protein] + hexadecanoyl-CoA = S-hexadecanoyl-L-cysteinyl-[protein] + CoA. Functionally, mediates the reversible addition of palmitate to target proteins, thereby regulating their membrane association and biological function. The chain is Palmitoyltransferase PFA4 from Yarrowia lipolytica (strain CLIB 122 / E 150) (Yeast).